Here is a 230-residue protein sequence, read N- to C-terminus: MTKKAIILLSGGLDSATTAAIALAAGYQLIALSFRYGQRHERELAAAKKIANFLNIKEHHLIEVNLSLWGGSALTDQSIAIPQEGINPDIIPITYVPGRNTVFISIALSLAEAREAEAIYLGINAVDYSGYPDCRPEYLDAFQTLANLSSKAGLEGKAPQLIAPLVMDSKVDIVRRAVSLGVPIADTWSCYQGEVEPCGLCDSCRIRDQALIEAGYPELATPLLKNSRGK.

ATP is bound at residue 9 to 19 (LSGGLDSATTA). The Zn(2+) site is built by cysteine 190, cysteine 198, cysteine 201, and cysteine 204.

Belongs to the QueC family. Requires Zn(2+) as cofactor.

The enzyme catalyses 7-carboxy-7-deazaguanine + NH4(+) + ATP = 7-cyano-7-deazaguanine + ADP + phosphate + H2O + H(+). It functions in the pathway purine metabolism; 7-cyano-7-deazaguanine biosynthesis. Functionally, catalyzes the ATP-dependent conversion of 7-carboxy-7-deazaguanine (CDG) to 7-cyano-7-deazaguanine (preQ(0)). This Microcystis aeruginosa (strain NIES-843 / IAM M-2473) protein is 7-cyano-7-deazaguanine synthase.